The primary structure comprises 230 residues: Lactate utilization protein C (230 aa).

This sequence belongs to the LutC/YkgG family.

Its function is as follows. Is involved in L-lactate degradation and allows cells to grow with lactate as the sole carbon source. The protein is Lactate utilization protein C of Halalkalibacterium halodurans (strain ATCC BAA-125 / DSM 18197 / FERM 7344 / JCM 9153 / C-125) (Bacillus halodurans).